The primary structure comprises 371 residues: Opine oxidase subunit B (371 aa).

As to quaternary structure, heterodimer of a subunit A and a subunit B.

The protein operates within opine metabolism; octopine degradation. Its function is as follows. Oxidative cleavage of octopine into L-arginine and pyruvate. This Rhizobium meliloti (Ensifer meliloti) protein is Opine oxidase subunit B (ooxB).